The following is a 78-amino-acid chain: Cytochrome b-c1 complex subunit 10, mitochondrial (78 aa).

The Mitochondrial matrix portion of the chain corresponds to 1–26; that stretch reads MVSYVKGPAYKALSHFGKLNAPLVRS. The chain crosses the membrane as a helical span at residues 27 to 46; the sequence is YIPNLVFWGAAAGGAVATFT. The Mitochondrial intermembrane segment spans residues 47–78; sequence EGVPLFQKTFYEKIPFFGQHWIYNPDPEDVPV.

Belongs to the UQCR11/QCR10 family. Component of the ubiquinol-cytochrome c oxidoreductase (cytochrome b-c1 complex, complex III, CIII), a multisubunit enzyme composed of 10 subunits. The complex is composed of 3 respiratory subunits cytochrome b (COB), cytochrome c1 (CYT1) and Rieske protein (RIP1), 2 core protein subunits COR1 and QCR2, and 5 low-molecular weight protein subunits QCR6, QCR7, QCR8, QCR9 and QCR10. The complex exists as an obligatory dimer and forms supercomplexes (SCs) in the inner mitochondrial membrane with a monomer or a dimer of cytochrome c oxidase (complex IV, CIV), resulting in 2 different assemblies (supercomplexes III(2)IV and III(2)IV(2)).

The protein resides in the mitochondrion inner membrane. Functionally, component of the ubiquinol-cytochrome c oxidoreductase, a multisubunit transmembrane complex that is part of the mitochondrial electron transport chain which drives oxidative phosphorylation. The complex plays an important role in the uptake of multiple carbon sources present in different host niches. The sequence is that of Cytochrome b-c1 complex subunit 10, mitochondrial from Candida albicans (strain SC5314 / ATCC MYA-2876) (Yeast).